Consider the following 308-residue polypeptide: Olfactory receptor 5K1 (308 aa).

Residues 1–25 (MAEENHTMKNEFILTGFTDHPELKT) lie on the Extracellular side of the membrane. N-linked (GlcNAc...) asparagine glycosylation occurs at Asn5. The helical transmembrane segment at 26 to 46 (LLFVVFFAIYLITVVGNISLV) threads the bilayer. Residues 47–54 (ALIFTHRR) lie on the Cytoplasmic side of the membrane. Residues 55-75 (LHTPMYIFLGNLALVDSCCAC) form a helical membrane-spanning segment. The Extracellular portion of the chain corresponds to 76–99 (AITPKMLENFFSENKRISLYECAV). The cysteines at positions 97 and 189 are disulfide-linked. A helical transmembrane segment spans residues 100-120 (QFYFLCTVETADCFLLAAMAY). Topologically, residues 121–139 (DRYVAICNPLQYHIMMSKK) are cytoplasmic. A helical transmembrane segment spans residues 140 to 160 (LCIQMTTGAFIAGNLHSMIHV). At 161-196 (GLVFRLVFCGSNHINHFYCDILPLYRLSCVDPYINE) the chain is on the extracellular side. Residues 197-217 (LVLFIFSGSVQVFTIGSVLIS) traverse the membrane as a helical segment. Residues 218-237 (YLYILLTIFKMKSKEGRAKA) lie on the Cytoplasmic side of the membrane. Residues 238-258 (FSTCASHFLSVSLFYGSLFFM) form a helical membrane-spanning segment. Topologically, residues 259 to 271 (YVRPNLLEEGDKD) are extracellular. Residues 272 to 292 (IPAAILFTIVVPLLNPFIYSL) traverse the membrane as a helical segment. The Cytoplasmic segment spans residues 293 to 308 (RNREVISVLRKILMKK).

It belongs to the G-protein coupled receptor 1 family.

Its subcellular location is the cell membrane. Odorant receptor. This Homo sapiens (Human) protein is Olfactory receptor 5K1 (OR5K1).